The sequence spans 215 residues: uncharacterized protein (215 aa).

The N-terminal stretch at 1–29 is a signal peptide; it reads MDKVQSGFLILFLFLMECQLHLCLPYADG. The Extracellular portion of the chain corresponds to 30 to 100; it reads LHPTGNITGL…IIRHRPALVK (71 aa). Residues 101–121 traverse the membrane as a helical segment; the sequence is VILISSVAFSIALICGMAISY. At 122–215 the chain is on the cytoplasmic side; sequence MIYRLAQAEE…ASHNGKMEDL (94 aa). Positions 191–215 are disordered; that stretch reads LKEEQNSVTENKTKNASHNGKMEDL. Residues 196–208 are compositionally biased toward polar residues; the sequence is NSVTENKTKNASH.

The protein resides in the membrane. This is an uncharacterized protein from Homo sapiens (Human).